A 529-amino-acid polypeptide reads, in one-letter code: Type I restriction enzyme StySJI methylase subunit (529 aa).

S-adenosyl-L-methionine is bound by residues 148–153 (QYFTPR), 178–180 (TAG), and Glu216. Positions 405-444 (YGEDPHGLSPREEGEWSFNAEESEVADSEENKNTDQHQAT) are disordered. Residues 407–418 (EDPHGLSPREEG) show a composition bias toward basic and acidic residues.

The protein belongs to the N(4)/N(6)-methyltransferase family. The type I restriction/modification system is composed of three polypeptides R, M and S; the restriction enzyme has stoichiometry R(2)M(2)S(1) while the methyltransferase is M(2)S(1).

The enzyme catalyses a 2'-deoxyadenosine in DNA + S-adenosyl-L-methionine = an N(6)-methyl-2'-deoxyadenosine in DNA + S-adenosyl-L-homocysteine + H(+). The subtype gamma methyltransferase (M) subunit of a type I restriction enzyme. The M and S subunits together form a methyltransferase (MTase) that methylates two adenine residues of the sequence 5'-GAGN(6)GTRC-3'. In the presence of the R subunit the complex can also act as an endonuclease, binding to the same target sequence but cutting the DNA some distance from this site. Whether the DNA is cut or modified depends on the methylation state of the target sequence. When the target site is unmodified, the DNA is cut. When the target site is hemimethylated, the complex acts as a maintenance MTase modifying the DNA so that both strands become methylated. After locating a non-methylated recognition site, the enzyme complex serves as a molecular motor that translocates DNA in an ATP-dependent manner until a collision occurs that triggers cleavage. The protein is Type I restriction enzyme StySJI methylase subunit of Salmonella typhimurium (strain LT2 / SGSC1412 / ATCC 700720).